The primary structure comprises 372 residues: Methylthioribose-1-phosphate isomerase 1 (372 aa).

Catalysis depends on Asp-254, which acts as the Proton donor.

The protein belongs to the eIF-2B alpha/beta/delta subunits family. MtnA subfamily.

Its subcellular location is the cytoplasm. The protein localises to the nucleus. It carries out the reaction 5-(methylsulfanyl)-alpha-D-ribose 1-phosphate = 5-(methylsulfanyl)-D-ribulose 1-phosphate. Its pathway is amino-acid biosynthesis; L-methionine biosynthesis via salvage pathway; L-methionine from S-methyl-5-thio-alpha-D-ribose 1-phosphate: step 1/6. In terms of biological role, catalyzes the interconversion of methylthioribose-1-phosphate (MTR-1-P) into methylthioribulose-1-phosphate (MTRu-1-P). This is Methylthioribose-1-phosphate isomerase 1 from Trypanosoma cruzi (strain CL Brener).